The following is a 255-amino-acid chain: Type III pantothenate kinase (255 aa).

6 to 13 (DVGNSYTM) lines the ATP pocket. 107–110 (GADR) provides a ligand contact to substrate. Asp109 serves as the catalytic Proton acceptor. Asp129 is a binding site for K(+). Thr132 lines the ATP pocket. A substrate-binding site is contributed by Thr183.

It belongs to the type III pantothenate kinase family. Homodimer. NH4(+) is required as a cofactor. The cofactor is K(+).

Its subcellular location is the cytoplasm. The enzyme catalyses (R)-pantothenate + ATP = (R)-4'-phosphopantothenate + ADP + H(+). Its pathway is cofactor biosynthesis; coenzyme A biosynthesis; CoA from (R)-pantothenate: step 1/5. Its function is as follows. Catalyzes the phosphorylation of pantothenate (Pan), the first step in CoA biosynthesis. The polypeptide is Type III pantothenate kinase (Petrotoga mobilis (strain DSM 10674 / SJ95)).